A 121-amino-acid chain; its full sequence is Ribosome-binding factor A (121 aa).

It belongs to the RbfA family. As to quaternary structure, monomer. Binds 30S ribosomal subunits, but not 50S ribosomal subunits or 70S ribosomes.

It is found in the cytoplasm. In terms of biological role, one of several proteins that assist in the late maturation steps of the functional core of the 30S ribosomal subunit. Associates with free 30S ribosomal subunits (but not with 30S subunits that are part of 70S ribosomes or polysomes). Required for efficient processing of 16S rRNA. May interact with the 5'-terminal helix region of 16S rRNA. This Clostridium novyi (strain NT) protein is Ribosome-binding factor A.